Here is a 300-residue protein sequence, read N- to C-terminus: UDP-N-acetylenolpyruvoylglucosamine reductase (300 aa).

Positions 28–193 constitute an FAD-binding PCMH-type domain; it reads KTGGPADWLA…LDATFALKLG (166 aa). Residue Arg-172 is part of the active site. Residue Ser-222 is the Proton donor of the active site. Glu-292 is a catalytic residue.

Belongs to the MurB family. FAD is required as a cofactor.

The protein resides in the cytoplasm. The catalysed reaction is UDP-N-acetyl-alpha-D-muramate + NADP(+) = UDP-N-acetyl-3-O-(1-carboxyvinyl)-alpha-D-glucosamine + NADPH + H(+). The protein operates within cell wall biogenesis; peptidoglycan biosynthesis. Its function is as follows. Cell wall formation. This chain is UDP-N-acetylenolpyruvoylglucosamine reductase, found in Limosilactobacillus fermentum (strain NBRC 3956 / LMG 18251) (Lactobacillus fermentum).